A 162-amino-acid polypeptide reads, in one-letter code: Beta-lactoglobulin-3 (162 aa).

Intrachain disulfides connect C66–C160 and C106–C119.

It belongs to the calycin superfamily. Lipocalin family. In terms of assembly, monomer.

The protein resides in the secreted. Functionally, lactoglobulin is the primary component of whey, it binds retinol and is probably involved in the transport of that molecule. The protein is Beta-lactoglobulin-3 (LGB3) of Felis catus (Cat).